The primary structure comprises 262 residues: tRNA pseudouridine synthase A (262 aa).

Residue D51 is the Nucleophile of the active site. Y109 provides a ligand contact to substrate.

Belongs to the tRNA pseudouridine synthase TruA family. In terms of assembly, homodimer.

It carries out the reaction uridine(38/39/40) in tRNA = pseudouridine(38/39/40) in tRNA. Its function is as follows. Formation of pseudouridine at positions 38, 39 and 40 in the anticodon stem and loop of transfer RNAs. In Legionella pneumophila (strain Lens), this protein is tRNA pseudouridine synthase A.